Here is a 241-residue protein sequence, read N- to C-terminus: Zinc finger CCHC domain-containing protein 17 (241 aa).

Positions 16 to 88 (YTIFQGEVAM…DRIKVSLSMK (73 aa)) constitute an S1 motif domain. Position 114 is a phosphoserine (serine 114). Residues 131-148 (TTCKKCGCKGHFAKDCFM) form a CCHC-type zinc finger. The residue at position 144 (lysine 144) is an N6-acetyllysine. Positions 161–241 (EEEEKEEAKS…KKKHKKKHKE (81 aa)) are disordered. The span at 166–178 (EEAKSAEFEKPDP) shows a compositional bias: basic and acidic residues. Residues 182 to 198 (PSRKRKKEKKKKKHRDR) show a composition bias toward basic residues. Serine 183 carries the post-translational modification Phosphoserine. Basic and acidic residues predominate over residues 211-225 (DTGKRARHTSKDSKA). Positions 226 to 241 (AKKKKKKKKHKKKHKE) are enriched in basic residues.

In terms of assembly, interacts with PNN. Associates with the 60S ribosomal subunit.

The protein resides in the nucleus. It is found in the nucleolus. The chain is Zinc finger CCHC domain-containing protein 17 (ZCCHC17) from Homo sapiens (Human).